The chain runs to 561 residues: Bifunctional NAD(P)H-hydrate repair enzyme (561 aa).

The tract at residues 1–241 (MLSRISERCT…WMIAAERMDA (241 aa)) is NAD(P)H-hydrate epimerase. Residues 29–235 (LRDAEPAAAA…SLGLEEWMIA (207 aa)) form the YjeF N-terminal domain. The interval 77–81 (NNGGD) is NADPHX 1; for epimerase activity. Positions 78 and 145 each coordinate K(+). An NADPHX 1; for epimerase activity region spans residues 149 to 155 (GTGISGP). Positions 160 and 178 each coordinate (6S)-NADPHX. Position 181 (serine 181) interacts with K(+). Positions 249–548 (LGDVYGYFST…PRIPFIVNAS (300 aa)) constitute a YjeF C-terminal domain. Positions 249 to 561 (LGDVYGYFST…SATQQRPSGL (313 aa)) are ADP-dependent (S)-NAD(P)H-hydrate dehydratase. Residue glycine 351 participates in (6S)-NADPHX binding. The NADPHX 2; for dehydratase activity stretch occupies residues 417–423 (HPGEAAR). ADP is bound by residues 454–458 (KGPGT) and 475–484 (NAGMASGGMG). Aspartate 485 provides a ligand contact to (6S)-NADPHX.

It in the N-terminal section; belongs to the NnrE/AIBP family. The protein in the C-terminal section; belongs to the NnrD/CARKD family. The cofactor is K(+).

The catalysed reaction is (6S)-NADHX + ADP = AMP + phosphate + NADH + H(+). It carries out the reaction (6S)-NADPHX + ADP = AMP + phosphate + NADPH + H(+). It catalyses the reaction (6R)-NADHX = (6S)-NADHX. The enzyme catalyses (6R)-NADPHX = (6S)-NADPHX. Functionally, bifunctional enzyme that catalyzes the epimerization of the S- and R-forms of NAD(P)HX and the dehydration of the S-form of NAD(P)HX at the expense of ADP, which is converted to AMP. This allows the repair of both epimers of NAD(P)HX, a damaged form of NAD(P)H that is a result of enzymatic or heat-dependent hydration. In Leishmania braziliensis, this protein is Bifunctional NAD(P)H-hydrate repair enzyme.